The primary structure comprises 380 residues: Flap endonuclease 1 (380 aa).

Residues 1-104 (MGIQGLAKLI…GELAKRAERR (104 aa)) are N-domain. Position 34 (Asp-34) interacts with Mg(2+). The DNA site is built by Arg-47 and Arg-70. Mg(2+) is bound by residues Asp-86, Glu-158, Glu-160, Asp-179, and Asp-181. The I-domain stretch occupies residues 122–253 (DVNKFQKRLV…KRAIELIRQY (132 aa)). Glu-158 contributes to the DNA binding site. Residues Gly-231 and Asp-233 each contribute to the DNA site. Residue Asp-233 coordinates Mg(2+). Positions 328–380 (LKNARHTSTQGRLDSFFKVMSSPSVKRKEPPKGAKGSASKKAKMSGGKFKKPK) are disordered. Residues 336 to 344 (TQGRLDSFF) are interaction with PCNA. The segment covering 365–380 (ASKKAKMSGGKFKKPK) has biased composition (basic residues).

The protein belongs to the XPG/RAD2 endonuclease family. FEN1 subfamily. As to quaternary structure, interacts with PCNA. Three molecules of FEN1 bind to one PCNA trimer with each molecule binding to one PCNA monomer. PCNA stimulates the nuclease activity without altering cleavage specificity. Requires Mg(2+) as cofactor. Phosphorylated. Phosphorylation upon DNA damage induces relocalization to the nuclear plasma.

The protein resides in the nucleus. It is found in the nucleolus. It localises to the nucleoplasm. The protein localises to the mitochondrion. Structure-specific nuclease with 5'-flap endonuclease and 5'-3' exonuclease activities involved in DNA replication and repair. During DNA replication, cleaves the 5'-overhanging flap structure that is generated by displacement synthesis when DNA polymerase encounters the 5'-end of a downstream Okazaki fragment. It enters the flap from the 5'-end and then tracks to cleave the flap base, leaving a nick for ligation. Also involved in the long patch base excision repair (LP-BER) pathway, by cleaving within the apurinic/apyrimidinic (AP) site-terminated flap. Acts as a genome stabilization factor that prevents flaps from equilibrating into structures that lead to duplications and deletions. Also possesses 5'-3' exonuclease activity on nicked or gapped double-stranded DNA, and exhibits RNase H activity. Also involved in replication and repair of rDNA and in repairing mitochondrial DNA. This chain is Flap endonuclease 1, found in Branchiostoma floridae (Florida lancelet).